The following is a 347-amino-acid chain: S-adenosylmethionine:tRNA ribosyltransferase-isomerase (347 aa).

It belongs to the QueA family. As to quaternary structure, monomer.

It is found in the cytoplasm. The catalysed reaction is 7-aminomethyl-7-carbaguanosine(34) in tRNA + S-adenosyl-L-methionine = epoxyqueuosine(34) in tRNA + adenine + L-methionine + 2 H(+). It functions in the pathway tRNA modification; tRNA-queuosine biosynthesis. Functionally, transfers and isomerizes the ribose moiety from AdoMet to the 7-aminomethyl group of 7-deazaguanine (preQ1-tRNA) to give epoxyqueuosine (oQ-tRNA). In Halalkalibacterium halodurans (strain ATCC BAA-125 / DSM 18197 / FERM 7344 / JCM 9153 / C-125) (Bacillus halodurans), this protein is S-adenosylmethionine:tRNA ribosyltransferase-isomerase.